Consider the following 255-residue polypeptide: 4-diphosphocytidyl-2-C-methyl-D-erythritol kinase (255 aa).

Lysine 6 is an active-site residue. 95–105 (PVCAGLGGGSS) contacts ATP. Aspartate 137 is a catalytic residue.

It belongs to the GHMP kinase family. IspE subfamily.

It catalyses the reaction 4-CDP-2-C-methyl-D-erythritol + ATP = 4-CDP-2-C-methyl-D-erythritol 2-phosphate + ADP + H(+). Its pathway is isoprenoid biosynthesis; isopentenyl diphosphate biosynthesis via DXP pathway; isopentenyl diphosphate from 1-deoxy-D-xylulose 5-phosphate: step 3/6. In terms of biological role, catalyzes the phosphorylation of the position 2 hydroxy group of 4-diphosphocytidyl-2C-methyl-D-erythritol. The sequence is that of 4-diphosphocytidyl-2-C-methyl-D-erythritol kinase from Campylobacter jejuni subsp. jejuni serotype O:6 (strain 81116 / NCTC 11828).